The following is a 595-amino-acid chain: Probable L-gulonolactone oxidase 1 (595 aa).

An N-terminal signal peptide occupies residues 1 to 18 (MAFWLSLIFFCFCTFASS). The region spanning 47-229 (SICEAAKVEY…SQVTFQLQPM (183 aa)) is the FAD-binding PCMH-type domain.

The protein belongs to the oxygen-dependent FAD-linked oxidoreductase family. FAD is required as a cofactor.

It catalyses the reaction L-gulono-1,4-lactone + O2 = L-ascorbate + H2O2 + H(+). It participates in cofactor biosynthesis; L-ascorbate biosynthesis. May be involved in the biosynthesis of ascorbic acid. The polypeptide is Probable L-gulonolactone oxidase 1 (Arabidopsis thaliana (Mouse-ear cress)).